Here is a 469-residue protein sequence, read N- to C-terminus: Interstitial collagenase (469 aa).

The N-terminal stretch at 1 to 18 is a signal peptide; that stretch reads MLSLPLLLLLLWGMGSHS. Residues 19 to 99 constitute a propeptide, activation peptide; that stretch reads FPTVPSETRE…PRCGVPDVAE (81 aa). The Cysteine switch motif lies at 90–97; that stretch reads PRCGVPDV. C92 contacts Zn(2+). Residues D124 and D158 each coordinate Ca(2+). The Zn(2+) site is built by H168 and D170. Ca(2+) is bound by residues D175, G176, G178, and N180. Zn(2+) is bound at residue H183. Positions 190, 192, and 194 each coordinate Ca(2+). Zn(2+) is bound at residue H196. Positions 198, 199, and 201 each coordinate Ca(2+). H218 serves as a coordination point for Zn(2+). E219 is an active-site residue. Zn(2+) is bound by residues H222 and H228. The residue at position 274 (T274) is a Phosphothreonine. 4 Hemopexin repeats span residues 275 to 324, 325 to 371, 374 to 422, and 423 to 466; these read PEVC…WPQL, PNGL…FGFP, VKNI…FPGI, and GDKV…WFNC. Cysteines 278 and 466 form a disulfide. D285 and Q329 together coordinate Ca(2+). Y360 bears the Phosphotyrosine; by PKDCC mark. Ca(2+) is bound by residues D378 and D427.

This sequence belongs to the peptidase M10A family. It depends on Ca(2+) as a cofactor. Requires Zn(2+) as cofactor. Post-translationally, tyrosine phosphorylated in platelets by PKDCC/VLK.

The protein localises to the secreted. It localises to the extracellular space. Its subcellular location is the extracellular matrix. It catalyses the reaction Cleavage of the triple helix of collagen at about three-quarters of the length of the molecule from the N-terminus, at 775-Gly-|-Ile-776 in the alpha1(I) chain. Cleaves synthetic substrates and alpha-macroglobulins at bonds where P1' is a hydrophobic residue.. Can be activated without removal of the activation peptide. Functionally, cleaves collagens of types I, II, and III at one site in the helical domain. Also cleaves collagens of types VII and X. The protein is Interstitial collagenase (MMP1) of Equus caballus (Horse).